The following is an 811-amino-acid chain: Auxin response factor 8 (811 aa).

Positions 126 to 228 form a DNA-binding region, TF-B3; sequence FCKTLTASDT…QLFLGIRHAT (103 aa). Disordered regions lie at residues 467-496 and 544-565; these read HQYLQQSASHNSDLMLQQQQQQQASRHLMH and HLQQWQQQSEMPSPSFMKSDFT. Composition is skewed to polar residues over residues 469–482 and 544–555; these read YLQQSASHNSDLML and HLQQWQQQSEMP. The region spanning 705-789 is the PB1 domain; the sequence is KNFVKVYKSG…WYIKILSPED (85 aa).

Belongs to the ARF family. Homodimers and heterodimers. As to expression, expressed in the whole plant.

The protein localises to the nucleus. Functionally, auxin response factors (ARFs) are transcriptional factors that bind specifically to the DNA sequence 5'-TGTCTC-3' found in the auxin-responsive promoter elements (AuxREs). Seems to act as transcriptional activator. Formation of heterodimers with Aux/IAA proteins may alter their ability to modulate early auxin response genes expression. Regulates both stamen and gynoecium maturation. Promotes jasmonic acid production. Partially redundant with ARF6. Involved in fruit initiation. Acts as an inhibitor to stop further carpel development in the absence of fertilization and the generation of signals required to initiate fruit and seed development. This is Auxin response factor 8 (ARF8) from Arabidopsis thaliana (Mouse-ear cress).